Here is a 292-residue protein sequence, read N- to C-terminus: Calcium-binding protein CBP (292 aa).

The interval 1–80 (MAGYPPNPGS…YGSGGGYGAP (80 aa)) is disordered. The segment covering 12-21 (YPYGGAGGYG) has biased composition (gly residues). The segment covering 22–40 (APPPPYGSSPAPSAPPYGA) has biased composition (pro residues). EF-hand domains follow at residues 121–156 (GTDPNVVACFQAADRDGSGMIDDKELQSALSGYSQS) and 187–222 (YSLQNWRSIFERFDRDRSGKIDATELRDALLSLGYS). Asp-134, Asp-136, Ser-138, Met-140, Glu-145, Asp-200, Asp-202, Ser-204, Lys-206, and Glu-211 together coordinate Ca(2+).

Functionally, potential calcium sensor. This Oryza sativa subsp. japonica (Rice) protein is Calcium-binding protein CBP.